The sequence spans 256 residues: Protein LIKE COV 1 (256 aa).

Basic and acidic residues predominate over residues methionine 1–leucine 10. Positions methionine 1–glutamine 39 are disordered. Over methionine 1–glycine 60 the chain is Cytoplasmic. Residues serine 25–glutamine 39 are compositionally biased toward low complexity. The chain crosses the membrane as a helical span at residues cysteine 61–valine 81. Topologically, residues aspartate 82–glycine 93 are extracellular. The chain crosses the membrane as a helical span at residues isoleucine 94–phenylalanine 114. Topologically, residues methionine 115 to serine 256 are cytoplasmic.

This sequence belongs to the plant COV1 protein family. In terms of tissue distribution, expressed at low levels in flowers, stems, roots and leaves.

The protein resides in the membrane. This chain is Protein LIKE COV 1, found in Arabidopsis thaliana (Mouse-ear cress).